We begin with the raw amino-acid sequence, 261 residues long: Proteasome subunit alpha type-4 (261 aa).

A phosphoserine mark is found at Ser-13 and Ser-75. The residue at position 127 (Lys-127) is an N6-acetyllysine. Ser-173 carries the post-translational modification Phosphoserine. Lys-176 carries the post-translational modification N6-acetyllysine. The segment at 240–261 (HEEEEAKAEREKKEKEQKEKDK) is disordered.

Belongs to the peptidase T1A family. As to quaternary structure, the 26S proteasome consists of a 20S proteasome core and two 19S regulatory subunits. The 20S proteasome core is a barrel-shaped complex made of 28 subunits that are arranged in four stacked rings. The two outer rings are each formed by seven alpha subunits, and the two inner rings are formed by seven beta subunits. The proteolytic activity is exerted by three beta-subunits PSMB5, PSMB6 and PSMB7.

The protein resides in the cytoplasm. Its subcellular location is the nucleus. In terms of biological role, component of the 20S core proteasome complex involved in the proteolytic degradation of most intracellular proteins. This complex plays numerous essential roles within the cell by associating with different regulatory particles. Associated with two 19S regulatory particles, forms the 26S proteasome and thus participates in the ATP-dependent degradation of ubiquitinated proteins. The 26S proteasome plays a key role in the maintenance of protein homeostasis by removing misfolded or damaged proteins that could impair cellular functions, and by removing proteins whose functions are no longer required. Associated with the PA200 or PA28, the 20S proteasome mediates ubiquitin-independent protein degradation. This type of proteolysis is required in several pathways including spermatogenesis (20S-PA200 complex) or generation of a subset of MHC class I-presented antigenic peptides (20S-PA28 complex). The polypeptide is Proteasome subunit alpha type-4 (PSMA4) (Bos taurus (Bovine)).